Consider the following 319-residue polypeptide: Malate dehydrogenase (319 aa).

NAD(+)-binding positions include 11–16 (GAGNVG) and Asp-36. Positions 85 and 91 each coordinate substrate. NAD(+) is bound by residues Asn-98 and 121–123 (VSN). Residues Asn-123 and Arg-154 each coordinate substrate. The active-site Proton acceptor is His-178.

This sequence belongs to the LDH/MDH superfamily. MDH type 3 family.

The catalysed reaction is (S)-malate + NAD(+) = oxaloacetate + NADH + H(+). Functionally, catalyzes the reversible oxidation of malate to oxaloacetate. The chain is Malate dehydrogenase from Sulfurimonas denitrificans (strain ATCC 33889 / DSM 1251) (Thiomicrospira denitrificans (strain ATCC 33889 / DSM 1251)).